The following is a 94-amino-acid chain: Pyrimidine/purine nucleoside phosphorylase 2 (94 aa).

This sequence belongs to the nucleoside phosphorylase PpnP family.

The enzyme catalyses a purine D-ribonucleoside + phosphate = a purine nucleobase + alpha-D-ribose 1-phosphate. The catalysed reaction is adenosine + phosphate = alpha-D-ribose 1-phosphate + adenine. It carries out the reaction cytidine + phosphate = cytosine + alpha-D-ribose 1-phosphate. It catalyses the reaction guanosine + phosphate = alpha-D-ribose 1-phosphate + guanine. The enzyme catalyses inosine + phosphate = alpha-D-ribose 1-phosphate + hypoxanthine. The catalysed reaction is thymidine + phosphate = 2-deoxy-alpha-D-ribose 1-phosphate + thymine. It carries out the reaction uridine + phosphate = alpha-D-ribose 1-phosphate + uracil. It catalyses the reaction xanthosine + phosphate = alpha-D-ribose 1-phosphate + xanthine. Functionally, catalyzes the phosphorolysis of diverse nucleosides, yielding D-ribose 1-phosphate and the respective free bases. Can use uridine, adenosine, guanosine, cytidine, thymidine, inosine and xanthosine as substrates. Also catalyzes the reverse reactions. The protein is Pyrimidine/purine nucleoside phosphorylase 2 of Psychrobacter arcticus (strain DSM 17307 / VKM B-2377 / 273-4).